A 125-amino-acid chain; its full sequence is Ribonuclease P protein component (125 aa).

This sequence belongs to the RnpA family. In terms of assembly, consists of a catalytic RNA component (M1 or rnpB) and a protein subunit.

It catalyses the reaction Endonucleolytic cleavage of RNA, removing 5'-extranucleotides from tRNA precursor.. Its function is as follows. RNaseP catalyzes the removal of the 5'-leader sequence from pre-tRNA to produce the mature 5'-terminus. It can also cleave other RNA substrates such as 4.5S RNA. The protein component plays an auxiliary but essential role in vivo by binding to the 5'-leader sequence and broadening the substrate specificity of the ribozyme. This is Ribonuclease P protein component from Rhodococcus opacus (strain B4).